We begin with the raw amino-acid sequence, 441 residues long: Polycomb protein EED (441 aa).

Residues 1–72 form a disordered region; that stretch reads MSEREVSTVP…PGRKSWGKGK (72 aa). N-acetylserine is present on Ser-2. Phosphoserine is present on residues Ser-2 and Ser-34. The span at 45-61 shows a compositional bias: polar residues; the sequence is ESGTNTERPDTPTNTPN. Phosphothreonine is present on Thr-55. The residue at position 66 (Lys-66) is an N6,N6,N6-trimethyllysine; alternate. Lys-66 is modified (N6,N6-dimethyllysine; alternate). At Lys-66 the chain carries N6-methyllysine; alternate. An interaction with EZH2 region spans residues 81-441; that stretch reads SFKCVNSLKE…ASIWRWDRLR (361 aa). WD repeat units lie at residues 91 to 134, 142 to 185, 188 to 228, and 234 to 275; these read DHNQ…EIRL, DADE…CIKH, GHGN…LVAI, and GHRD…NAIK. Lys-197, Lys-268, and Lys-284 each carry N6,N6,N6-trimethyllysine; alternate. N6,N6-dimethyllysine; alternate is present on residues Lys-197, Lys-268, and Lys-284. Lys-197, Lys-268, and Lys-284 each carry N6-methyllysine; alternate. WD repeat units follow at residues 304-341, 359-399, and 408-441; these read IHRNYVDCVRWLGDLILSKSCENAIVCWKPGKMEDDID, SQCD…PHKA, and KCGAAIRQTSFSRDSSILIAVCDDASIWRWDRLR.

The protein belongs to the WD repeat ESC family. As to quaternary structure, component of the PRC2/EED-EZH2 complex, which includes EED, EZH2, SUZ12, RBBP4 and RBBP7 and possibly AEBP2. The minimum components required for methyltransferase activity of the PRC2/EED-EZH2 complex are EED, EZH2 and SUZ12. Component of the PRC2/EED-EZH1 complex, which includes EED, EZH1, SUZ12, RBBP4 and AEBP2. The PRC2 complex may also interact with DNMT1, DNMT3A, DNMT3B and PHF1 via the EZH2 subunit and with SIRT1 via the SUZ12 subunit. Interacts with HDAC, HDAC2, histone H1, KMT2A/MLL1 and YY1. May interact with ITGA4, ITGAE and ITGB7. Interacts with CDYL. Interacts with BMAL1. In terms of processing, methylated. Binding to histone H1 'Lys-26' promotes mono-, di-, and trimethylation of internal lysines.

It is found in the nucleus. Its function is as follows. Polycomb group (PcG) protein. Component of the PRC2/EED-EZH2 complex, which methylates 'Lys-9' and 'Lys-27' of histone H3, leading to transcriptional repression of the affected target gene. Also recognizes 'Lys-26' trimethylated histone H1 with the effect of inhibiting PRC2 complex methyltransferase activity on nucleosomal histone H3 'Lys-27', whereas H3 'Lys-27' recognition has the opposite effect, enabling the propagation of this repressive mark. The PRC2/EED-EZH2 complex may also serve as a recruiting platform for DNA methyltransferases, thereby linking two epigenetic repression systems. The protein is Polycomb protein EED (EED) of Bos taurus (Bovine).